The following is a 446-amino-acid chain: Probable E3 ubiquitin-protein ligase XBOS31 (446 aa).

ANK repeat units follow at residues 46–75 (DRFT…DVDV), 79–108 (KKQT…NVLT), 113–142 (RART…QAQG), 160–189 (RGAT…IVSA), and 197–227 (PGST…RLQR). Residues 317-366 (CNICFEQACSMEVKECGHQMCAACTLAICCHSKPNPKTLLLHPPACPFCR) form an RING-type zinc finger. The tract at residues 376–401 (TTNSNKTNSRRRSRSRSSSFKGGLSS) is disordered.

The catalysed reaction is S-ubiquitinyl-[E2 ubiquitin-conjugating enzyme]-L-cysteine + [acceptor protein]-L-lysine = [E2 ubiquitin-conjugating enzyme]-L-cysteine + N(6)-ubiquitinyl-[acceptor protein]-L-lysine.. It functions in the pathway protein modification; protein ubiquitination. This chain is Probable E3 ubiquitin-protein ligase XBOS31 (XBOS31), found in Oryza sativa subsp. japonica (Rice).